The following is a 165-amino-acid chain: NADPH-dependent 7-cyano-7-deazaguanine reductase (165 aa).

The active-site Thioimide intermediate is the cysteine 56. Aspartate 63 functions as the Proton donor in the catalytic mechanism. Substrate-binding positions include 78 to 80 (VES) and 97 to 98 (HE).

Belongs to the GTP cyclohydrolase I family. QueF type 1 subfamily.

The protein localises to the cytoplasm. The catalysed reaction is 7-aminomethyl-7-carbaguanine + 2 NADP(+) = 7-cyano-7-deazaguanine + 2 NADPH + 3 H(+). It functions in the pathway tRNA modification; tRNA-queuosine biosynthesis. Functionally, catalyzes the NADPH-dependent reduction of 7-cyano-7-deazaguanine (preQ0) to 7-aminomethyl-7-deazaguanine (preQ1). This is NADPH-dependent 7-cyano-7-deazaguanine reductase from Bacillus licheniformis (strain ATCC 14580 / DSM 13 / JCM 2505 / CCUG 7422 / NBRC 12200 / NCIMB 9375 / NCTC 10341 / NRRL NRS-1264 / Gibson 46).